We begin with the raw amino-acid sequence, 371 residues long: Cysteine proteinase EP-B 1 (371 aa).

Residues 1–28 form the signal peptide; that stretch reads MGLLSKKLLVASMVAAVLAVAAVELCSA. The propeptide at 29–133 is activation peptide; the sequence is IPMEDKDLES…FMYAALNVSD (105 aa). Residue Asn-130 is glycosylated (N-linked (GlcNAc...) asparagine). 3 disulfide bridges follow: Cys-155–Cys-197, Cys-189–Cys-230, and Cys-291–Cys-343. The active site involves Cys-158. Active-site residues include His-297 and Asn-318.

It belongs to the peptidase C1 family.

The sequence is that of Cysteine proteinase EP-B 1 from Hordeum vulgare (Barley).